Here is a 336-residue protein sequence, read N- to C-terminus: DNA-directed RNA polymerase subunit alpha (336 aa).

The tract at residues 1–232 is alpha N-terminal domain (alpha-NTD); the sequence is MIQKNWQELI…DQLSVFVNFD (232 aa). The interval 248 to 336 is alpha C-terminal domain (alpha-CTD); it reads FNPALLKKVD…DLAKRYEDQY (89 aa).

The protein belongs to the RNA polymerase alpha chain family. As to quaternary structure, homodimer. The RNAP catalytic core consists of 2 alpha, 1 beta, 1 beta' and 1 omega subunit. When a sigma factor is associated with the core the holoenzyme is formed, which can initiate transcription.

The catalysed reaction is RNA(n) + a ribonucleoside 5'-triphosphate = RNA(n+1) + diphosphate. Its function is as follows. DNA-dependent RNA polymerase catalyzes the transcription of DNA into RNA using the four ribonucleoside triphosphates as substrates. The protein is DNA-directed RNA polymerase subunit alpha of Sinorhizobium medicae (strain WSM419) (Ensifer medicae).